Here is an 855-residue protein sequence, read N- to C-terminus: DNA mismatch repair protein MutS (855 aa).

615 to 622 (GPNMGGKS) is a binding site for ATP.

The protein belongs to the DNA mismatch repair MutS family.

Its function is as follows. This protein is involved in the repair of mismatches in DNA. It is possible that it carries out the mismatch recognition step. This protein has a weak ATPase activity. This chain is DNA mismatch repair protein MutS, found in Aliivibrio salmonicida (strain LFI1238) (Vibrio salmonicida (strain LFI1238)).